A 380-amino-acid polypeptide reads, in one-letter code: Flap endonuclease 1-A (380 aa).

The segment at 1-105 (MGIKGLTKLL…EELAKRFSKR (105 aa)) is N-domain. Residue Asp34 participates in Mg(2+) binding. Arg71 provides a ligand contact to DNA. 5 residues coordinate Mg(2+): Asp87, Glu159, Glu161, Asp180, and Asp182. The tract at residues 123–254 (AVEKLSKRTV…QTALKLIRQH (132 aa)) is I-domain. Residue Glu159 coordinates DNA. Residues Gly232 and Asp234 each contribute to the DNA site. Mg(2+) is bound at residue Asp234. The tract at residues 336–344 (SQGRLESFF) is interaction with PCNA. The interval 351-380 (SAPLKRKETSDKTSKAAAANKKTKAGGKKK) is disordered. The segment covering 355 to 364 (KRKETSDKTS) has biased composition (basic and acidic residues). Residues 371–380 (KKTKAGGKKK) show a composition bias toward basic residues.

The protein belongs to the XPG/RAD2 endonuclease family. FEN1 subfamily. In terms of assembly, interacts with PCNA. Three molecules of FEN1 bind to one PCNA trimer with each molecule binding to one PCNA monomer. PCNA stimulates the nuclease activity without altering cleavage specificity. It depends on Mg(2+) as a cofactor. Phosphorylated. Phosphorylation upon DNA damage induces relocalization to the nuclear plasma.

It is found in the nucleus. The protein resides in the nucleolus. Its subcellular location is the nucleoplasm. The protein localises to the mitochondrion. Structure-specific nuclease with 5'-flap endonuclease and 5'-3' exonuclease activities involved in DNA replication and repair. During DNA replication, cleaves the 5'-overhanging flap structure that is generated by displacement synthesis when DNA polymerase encounters the 5'-end of a downstream Okazaki fragment. It enters the flap from the 5'-end and then tracks to cleave the flap base, leaving a nick for ligation. Also involved in the long patch base excision repair (LP-BER) pathway, by cleaving within the apurinic/apyrimidinic (AP) site-terminated flap. Acts as a genome stabilization factor that prevents flaps from equilibrating into structures that lead to duplications and deletions. Also possesses 5'-3' exonuclease activity on nicked or gapped double-stranded DNA, and exhibits RNase H activity. Also involved in replication and repair of rDNA and in repairing mitochondrial DNA. This is Flap endonuclease 1-A from Sorghum bicolor (Sorghum).